The primary structure comprises 230 residues: ATP synthase subunit a (230 aa).

6 consecutive transmembrane segments (helical) span residues 16–36 (LVLFIPMTLTAVFLNLSWLSI), 73–93 (WVSAFTAIFILIFSINVLGLL), 106–126 (TYSIGVPLWMSVNILGFYLAF), 142–162 (LIPFMVIIETISLFAQPIALG), 165–185 (LAANLTAGHLLIFLLSTAIWT), and 192–212 (IASITLLIFFFLFLLEIGVAC).

The protein belongs to the ATPase A chain family. As to quaternary structure, F-type ATPases have 2 components, CF(1) - the catalytic core - and CF(0) - the membrane proton channel. CF(1) has five subunits: alpha(3), beta(3), gamma(1), delta(1), epsilon(1). CF(0) has three main subunits: a, b and c.

It localises to the mitochondrion inner membrane. In terms of biological role, mitochondrial membrane ATP synthase (F(1)F(0) ATP synthase or Complex V) produces ATP from ADP in the presence of a proton gradient across the membrane which is generated by electron transport complexes of the respiratory chain. F-type ATPases consist of two structural domains, F(1) - containing the extramembraneous catalytic core and F(0) - containing the membrane proton channel, linked together by a central stalk and a peripheral stalk. During catalysis, ATP synthesis in the catalytic domain of F(1) is coupled via a rotary mechanism of the central stalk subunits to proton translocation. Key component of the proton channel; it may play a direct role in the translocation of protons across the membrane. The protein is ATP synthase subunit a (ATP6) of Patiria pectinifera (Starfish).